A 607-amino-acid polypeptide reads, in one-letter code: UvrABC system protein C (607 aa).

The GIY-YIG domain occupies 15–94 (ENPGVYLMKN…IKRHRPYFNV (80 aa)). The region spanning 204-239 (DQVLKLLIRLMNEASARLDYETAALRRDQIASIKEV) is the UVR domain.

Belongs to the UvrC family. Interacts with UvrB in an incision complex.

The protein resides in the cytoplasm. In terms of biological role, the UvrABC repair system catalyzes the recognition and processing of DNA lesions. UvrC both incises the 5' and 3' sides of the lesion. The N-terminal half is responsible for the 3' incision and the C-terminal half is responsible for the 5' incision. The chain is UvrABC system protein C from Dehalococcoides mccartyi (strain ATCC BAA-2100 / JCM 16839 / KCTC 5957 / BAV1).